Here is a 221-residue protein sequence, read N- to C-terminus: Probable GTP-binding protein EngB (221 aa).

The EngB-type G domain maps to Gln-37–Glu-219. GTP-binding positions include Gly-45–Ser-52, Gly-72–Glu-76, Asp-97–Gly-100, Thr-164–Asp-167, and Thr-198–Ser-200. Ser-52 and Thr-74 together coordinate Mg(2+).

The protein belongs to the TRAFAC class TrmE-Era-EngA-EngB-Septin-like GTPase superfamily. EngB GTPase family. Requires Mg(2+) as cofactor.

In terms of biological role, necessary for normal cell division and for the maintenance of normal septation. The polypeptide is Probable GTP-binding protein EngB (Afipia carboxidovorans (strain ATCC 49405 / DSM 1227 / KCTC 32145 / OM5) (Oligotropha carboxidovorans)).